The chain runs to 358 residues: Putative pyruvyl transferase EpsI (358 aa).

It belongs to the polysaccharide pyruvyl transferase family.

Its function is as follows. May be involved in the production of the exopolysaccharide (EPS) component of the extracellular matrix during biofilm formation. EPS is responsible for the adhesion of chains of cells into bundles. In Bacillus subtilis (strain 168), this protein is Putative pyruvyl transferase EpsI (epsI).